Here is a 380-residue protein sequence, read N- to C-terminus: Cytochrome b (380 aa).

4 helical membrane-spanning segments follow: residues 34 to 54 (FGSL…LLAA), 78 to 99 (WLIR…YLHI), 114 to 134 (WNTG…GYVL), and 179 to 199 (FFTL…IHLT). Residues H84 and H98 each coordinate heme b. Positions 183 and 197 each coordinate heme b. Residue H202 participates in a ubiquinone binding. 4 consecutive transmembrane segments (helical) span residues 227–247 (LKDI…ALFS), 289–309 (LGGV…PLLH), 321–341 (FSQL…WVGS), and 348–368 (FIII…ILFP).

The protein belongs to the cytochrome b family. In terms of assembly, the cytochrome bc1 complex contains 11 subunits: 3 respiratory subunits (MT-CYB, CYC1 and UQCRFS1), 2 core proteins (UQCRC1 and UQCRC2) and 6 low-molecular weight proteins (UQCRH/QCR6, UQCRB/QCR7, UQCRQ/QCR8, UQCR10/QCR9, UQCR11/QCR10 and a cleavage product of UQCRFS1). This cytochrome bc1 complex then forms a dimer. It depends on heme b as a cofactor.

The protein localises to the mitochondrion inner membrane. Component of the ubiquinol-cytochrome c reductase complex (complex III or cytochrome b-c1 complex) that is part of the mitochondrial respiratory chain. The b-c1 complex mediates electron transfer from ubiquinol to cytochrome c. Contributes to the generation of a proton gradient across the mitochondrial membrane that is then used for ATP synthesis. This chain is Cytochrome b (MT-CYB), found in Antigone rubicunda (Brolga crane).